The chain runs to 415 residues: Putative ankyrin repeat protein FPV034 (415 aa).

10 ANK repeats span residues 12–41, 43–72, 76–105, 107–135, 139–168, 170–200, 203–232, 237–266, 270–299, and 303–332; these read ICIKLLEQAIELKDYIVVRMILNQQENINT, KHFNMLRKAVLNHDHNLVNIFIDKNFNINI, VGYTLLRYAVEVDDVNIAKILLDAGSIINK, DYRLLHSAITHENKKMIELLCLHGININV, KGYTALYYTICNNNYDMVCFLLEKNADISI, NKYSMLHFLSTSNKYHNVMAVLLDKGIDVNI, HVKAPIHVAVERNNIYGTMLLINRNADVNI, GGRTSLHLAIKERNYEAAFVLINNGANVDS, VGNTPIFIAASLQDVRFMKLLLDNGADINV, and FGETPVNMVITGGSKEVTQYTVSYLISLKV.

The protein is Putative ankyrin repeat protein FPV034 (ANK2) of Fowlpox virus (strain NVSL) (FPV).